A 364-amino-acid chain; its full sequence is D-alanine--D-alanine ligase (364 aa).

In terms of domain architecture, ATP-grasp spans 134–347; the sequence is RRLACINGLK…YPDLLDELIN (214 aa). 167–222 contacts ATP; sequence ASEFGWPLFVKPCSLGSSVGIHKANNMDELNAAVADALRYDEEILVEEFIVGREIE. Asp-300, Glu-314, and Asn-316 together coordinate Mg(2+).

Belongs to the D-alanine--D-alanine ligase family. Mg(2+) serves as cofactor. It depends on Mn(2+) as a cofactor.

It localises to the cytoplasm. It carries out the reaction 2 D-alanine + ATP = D-alanyl-D-alanine + ADP + phosphate + H(+). It participates in cell wall biogenesis; peptidoglycan biosynthesis. Cell wall formation. The protein is D-alanine--D-alanine ligase of Legionella pneumophila (strain Lens).